The primary structure comprises 361 residues: Ribosomal RNA large subunit methyltransferase M (361 aa).

S-adenosyl-L-methionine is bound by residues Ser193, 226 to 229 (CPGG), Asp245, Asp265, and Asp283. The Proton acceptor role is filled by Lys312.

It belongs to the class I-like SAM-binding methyltransferase superfamily. RNA methyltransferase RlmE family. RlmM subfamily. As to quaternary structure, monomer.

The protein localises to the cytoplasm. It catalyses the reaction cytidine(2498) in 23S rRNA + S-adenosyl-L-methionine = 2'-O-methylcytidine(2498) in 23S rRNA + S-adenosyl-L-homocysteine + H(+). Catalyzes the 2'-O-methylation at nucleotide C2498 in 23S rRNA. This Histophilus somni (strain 129Pt) (Haemophilus somnus) protein is Ribosomal RNA large subunit methyltransferase M.